A 90-amino-acid chain; its full sequence is DNA/RNA-binding protein Alba (90 aa).

An N6-acetyllysine modification is found at K11.

This sequence belongs to the histone-like Alba family. Acetylated. Acetylation at Lys-11 decreases DNA-binding affinity.

The protein localises to the cytoplasm. Its subcellular location is the chromosome. In terms of biological role, binds double-stranded DNA tightly but without sequence specificity. Involved in DNA compaction. The protein is DNA/RNA-binding protein Alba of Picrophilus torridus (strain ATCC 700027 / DSM 9790 / JCM 10055 / NBRC 100828 / KAW 2/3).